A 254-amino-acid chain; its full sequence is PF03932 family protein CutC (254 aa).

Belongs to the CutC family.

The protein localises to the cytoplasm. This Yersinia enterocolitica serotype O:8 / biotype 1B (strain NCTC 13174 / 8081) protein is PF03932 family protein CutC.